We begin with the raw amino-acid sequence, 1134 residues long: Tyrosine-protein kinase receptor Tie-1 (1134 aa).

The first 22 residues, 1 to 22 (MVWWGSSLLLPTLFLASHVGAS), serve as a signal peptide directing secretion. Residues 23-755 (VDLTLLANLR…SRAAEEGLDQ (733 aa)) are Extracellular-facing. Residues 43-123 (CVSGEAGAGR…VLYVHNSPGA (81 aa)) enclose the Ig-like C2-type 1 domain. 2 N-linked (GlcNAc...) asparagine glycosylation sites follow: Asn-81 and Asn-159. EGF-like domains follow at residues 212 to 254 (GCGA…TRCE), 256 to 301 (ACRE…SQCQ), and 303 to 343 (ACAP…VHCE). Disulfide bonds link Cys-226–Cys-235, Cys-229–Cys-242, Cys-244–Cys-253, Cys-266–Cys-276, Cys-270–Cys-289, Cys-291–Cys-300, Cys-313–Cys-325, Cys-319–Cys-331, and Cys-333–Cys-342. One can recognise an Ig-like C2-type 2 domain in the interval 349–440 (PQILSMATEV…GQDSRRFKVN (92 aa)). 3 consecutive Fibronectin type-III domains span residues 444–543 (PPVP…CPEP), 546–638 (QPWL…LPPS), and 642–736 (APRH…LGNG). N-linked (GlcNAc...) asparagine glycosylation is found at Asn-501, Asn-592, and Asn-705. A helical membrane pass occupies residues 756–780 (QLVLAVVGSVSATCLTILAALLALV). The Cytoplasmic portion of the chain corresponds to 781–1134 (CIRRSCLHRR…AGIDATAEEA (354 aa)). Residues 835-1114 (ITFEDLIGEG…RMLEARKAYV (280 aa)) enclose the Protein kinase domain. Residues 841–849 (IGEGNFGQV) and Lys-866 contribute to the ATP site. Asp-975 (proton acceptor) is an active-site residue. Residue Tyr-1003 is modified to Phosphotyrosine; by autocatalysis.

The protein belongs to the protein kinase superfamily. Tyr protein kinase family. Tie subfamily. In terms of assembly, heterodimer with TEK/TIE2. Interacts with SVEP1 (via C-terminus). In terms of processing, phosphorylated on tyrosine residues in response to ANGPT1, most likely by TEK/TIE2. Specifically expressed in developing vascular endothelial cells. Abundantly expressed in lung and heart, moderately in brain, liver and kidney, and weakly in thymus, spleen and testis.

The protein resides in the cell membrane. It carries out the reaction L-tyrosyl-[protein] + ATP = O-phospho-L-tyrosyl-[protein] + ADP + H(+). Functionally, transmembrane tyrosine-protein kinase that may modulate TEK/TIE2 activity and contribute to the regulation of angiogenesis. In Mus musculus (Mouse), this protein is Tyrosine-protein kinase receptor Tie-1 (Tie1).